A 150-amino-acid chain; its full sequence is MDTMQGESNIVEIWTDGGCKPNPGPGGWAAILLYRGTEKELSGFDPETTNNRMELTAAAAALEALTRPCKVVLNTDSEYVRNGITRWKDGWVRRNWRNASGDPVANMDLWRRLLDAAARHEIDWRWVRGHAGNPMNERADQLATKARMEG.

Residues 7–148 form the RNase H type-1 domain; sequence ESNIVEIWTD…ADQLATKARM (142 aa). Mg(2+) is bound by residues Asp-16, Glu-54, Asp-76, and Asp-140.

Belongs to the RNase H family. As to quaternary structure, monomer. The cofactor is Mg(2+).

The protein localises to the cytoplasm. The catalysed reaction is Endonucleolytic cleavage to 5'-phosphomonoester.. Functionally, endonuclease that specifically degrades the RNA of RNA-DNA hybrids. This chain is Ribonuclease H, found in Granulibacter bethesdensis (strain ATCC BAA-1260 / CGDNIH1).